A 596-amino-acid chain; its full sequence is MSNYSVSLVGPAPWGFRLQGGKDFNMPLTISSLKDGGKAAQANVRIGDVVLSIDGINAQGMTHLEAQNKIKGCTGSLNMTLQRASAAPKPEPVPVQKGEPKEVVKPVPITSPAVSKVTSTNNMAYNKAPRPFGSVSSPKVTSIPSPSSAFTPAHATTSSHASPSPVAAVTPPLFAASGLHANANLSADQSPSALSAGKTAVNVPRQPTVTSVCSETSQELAEGQRRGSQGDSKQQNGPPRKHIVERYTEFYHVPTHSDASKKRLIEDTEDWRPRTGTTQSRSFRILAQITGTEHLKESEADNTKKANNSQEPSPQLASSVASTRSMPESLDSPTSGRPGVTSLTAAAAFKPVGSTGVIKSPSWQRPNQGVPSTGRISNSATYSGSVAPANSALGQTQPSDQDTLVQRAEHIPAGKRTPMCAHCNQVIRGPFLVALGKSWHPEEFNCAHCKNTMAYIGFVEEKGALYCELCYEKFFAPECGRCQRKILGEVISALKQTWHVSCFVCVACGKPIRNNVFHLEDGEPYCETDYYALFGTICHGCEFPIEAGDMFLEALGYTWHDTCFVCSVCCESLEGQTFFSKKDKPLCKKHAHSVNF.

Ser2 bears the N-acetylserine mark. Ser2 is subject to Phosphoserine. The PDZ domain maps to 2–85; that stretch reads SNYSVSLVGP…SLNMTLQRAS (84 aa). An N6-acetyllysine; alternate modification is found at Lys89. Residue Lys89 is modified to N6-succinyllysine; alternate. A Glycyl lysine isopeptide (Lys-Gly) (interchain with G-Cter in SUMO2); alternate cross-link involves residue Lys89. Phosphoserine occurs at positions 111, 134, and 137. Disordered stretches follow at residues 121 to 165, 196 to 240, and 255 to 340; these read NNMA…SPSP, AGKT…GPPR, and THSD…RPGV. Positions 134 to 143 are enriched in polar residues; the sequence is SVSSPKVTSI. Residues 144–165 show a composition bias toward low complexity; it reads PSPSSAFTPAHATTSSHASPSP. 2 stretches are compositionally biased toward polar residues: residues 205–219 and 226–237; these read RQPT…TSQE and RGSQGDSKQQNG. A phosphoserine mark is found at Ser228 and Ser260. Basic and acidic residues-rich tracts occupy residues 258 to 273 and 293 to 304; these read DASK…DWRP and EHLKESEADNTK. Positions 305–335 are enriched in polar residues; that stretch reads KANNSQEPSPQLASSVASTRSMPESLDSPTS. Phosphoserine occurs at positions 309, 313, and 322. An N6-acetyllysine modification is found at Lys350. The disordered stretch occupies residues 354 to 381; that stretch reads STGVIKSPSWQRPNQGVPSTGRISNSAT. Ser360 and Ser362 each carry phosphoserine. The span at 361–381 shows a compositional bias: polar residues; the sequence is PSWQRPNQGVPSTGRISNSAT. LIM zinc-binding domains lie at 418-477, 477-536, and 536-596; these read PMCA…FFAP, PECG…LFGT, and TICH…SVNF.

As to quaternary structure, interacts with various PKC isoforms through the LIM domains. Interacts with actin and alpha-actinin through the PDZ domain. Interacts (via LIM domains) with SIPA1L1/SPAR; this interaction may occur preferentially with isoform 1. As to expression, heart and skeletal muscle specific. Expression is commonly increased in the brain of patients with bipolar disorder, schizophrenia, and major depression.

It localises to the postsynaptic density. It is found in the presynapse. The protein localises to the postsynapse. The protein resides in the cytoplasm. Its subcellular location is the cytosol. May play an important role in the heart development by scaffolding PKC to the Z-disk region. May play a role in the regulation of cardiomyocyte expansion. Isoforms lacking the LIM domains may negatively modulate the scaffolding activity of isoform 1. Overexpression promotes the development of heart hypertrophy. Contributes to the regulation of dendritic spine morphogenesis in neurons. May be required to restrain postsynaptic growth of excitatory synapses. Isoform 1, but not isoform 2, expression favors spine thinning and elongation. In Homo sapiens (Human), this protein is PDZ and LIM domain protein 5.